Consider the following 682-residue polypeptide: Iron-phytosiderophore transporter yellow stripe 1 (682 aa).

The segment at 1–36 (MDLARRGGAAGADDEGEIERHEPAPEDMESDPAAAR) is disordered. Transmembrane regions (helical) follow at residues 56-76 (GVVA…KIAL), 79-99 (GLVP…LRGW), 124-144 (CAVA…LLGL), 167-187 (GFGW…LSLI), 236-256 (LSFV…CGFV), 288-308 (LVNI…WPLI), 334-354 (FLCI…VFGV), 396-416 (FPAW…AVII), 428-448 (VIVA…GTGL), 460-480 (IALF…AGLA), 514-534 (VAQF…FLLF), 549-569 (APYG…FSVL), 574-594 (LALS…RDVL), 612-632 (FLVG…VFVW), and 640-660 (AVFM…IWTF).

Belongs to the YSL (TC 2.A.67.2) family. In terms of tissue distribution, expressed in roots of young maize seedlings. Not detected in leaves of iron-sufficient plants, but accumulates in roots and leaves of iron-deficient plants.

It is found in the membrane. Involved in Fe(3+) uptake. Acts as a proton-coupled symporter for phytosiderophore- and nicotianamine-chelated metals. Capable of transporting either Fe(2+)-nicotianamine or Fe(3+)-phytosiderophore. May transport iron, zinc, nickel, copper and, at a lower rate, manganese and cadmium. This Zea mays (Maize) protein is Iron-phytosiderophore transporter yellow stripe 1 (YS1).